The chain runs to 262 residues: MINTCALKNYLEKSQKKESPAKETIVTSLNRSLSTPPSHLEGILLINKPKGKTSFSLVRDLRKRLGVKKIGHAGTLDPFATGVMVMLVGRNYTRLSDQFLLSDKEYIAEAYLGVVTDSYDCEGQVLSQSNIIPTLEQIKEAFSLFQGKIEQVPPMFSAKKQQGKKLYELARQGIVVERQPVKISIHTELLSYNYPYLNFRIECSKGTYIRSIAYDLGTKLGCGAHLSNLTRTRSGAFCLENCLNGAEIHTVTNLEQNLIRND.

Residue Asp-77 is the Nucleophile of the active site.

This sequence belongs to the pseudouridine synthase TruB family. Type 1 subfamily.

It carries out the reaction uridine(55) in tRNA = pseudouridine(55) in tRNA. Functionally, responsible for synthesis of pseudouridine from uracil-55 in the psi GC loop of transfer RNAs. This Protochlamydia amoebophila (strain UWE25) protein is tRNA pseudouridine synthase B.